The sequence spans 379 residues: 1-deoxy-D-xylulose 5-phosphate reductoisomerase (379 aa).

7 residues coordinate NADPH: threonine 10, glycine 11, serine 12, isoleucine 13, arginine 38, asparagine 39, and asparagine 121. Lysine 122 is a 1-deoxy-D-xylulose 5-phosphate binding site. Glutamate 123 serves as a coordination point for NADPH. Aspartate 147 serves as a coordination point for Mn(2+). Residues serine 148, glutamate 149, serine 173, and histidine 196 each coordinate 1-deoxy-D-xylulose 5-phosphate. Residue glutamate 149 coordinates Mn(2+). Residue glycine 202 participates in NADPH binding. Residues serine 209, asparagine 214, lysine 215, and glutamate 218 each contribute to the 1-deoxy-D-xylulose 5-phosphate site. Glutamate 218 provides a ligand contact to Mn(2+).

Belongs to the DXR family. Mg(2+) is required as a cofactor. The cofactor is Mn(2+).

It carries out the reaction 2-C-methyl-D-erythritol 4-phosphate + NADP(+) = 1-deoxy-D-xylulose 5-phosphate + NADPH + H(+). It functions in the pathway isoprenoid biosynthesis; isopentenyl diphosphate biosynthesis via DXP pathway; isopentenyl diphosphate from 1-deoxy-D-xylulose 5-phosphate: step 1/6. Functionally, catalyzes the NADPH-dependent rearrangement and reduction of 1-deoxy-D-xylulose-5-phosphate (DXP) to 2-C-methyl-D-erythritol 4-phosphate (MEP). The protein is 1-deoxy-D-xylulose 5-phosphate reductoisomerase of Chlamydia muridarum (strain MoPn / Nigg).